A 368-amino-acid chain; its full sequence is Phosphoserine aminotransferase (368 aa).

Position 42 (Arg-42) interacts with L-glutamate. Trp-101, Thr-151, Asp-175, and Gln-198 together coordinate pyridoxal 5'-phosphate. Lys-199 carries the N6-(pyridoxal phosphate)lysine modification. Residue 240–241 (NT) coordinates pyridoxal 5'-phosphate.

This sequence belongs to the class-V pyridoxal-phosphate-dependent aminotransferase family. SerC subfamily. As to quaternary structure, homodimer. Pyridoxal 5'-phosphate is required as a cofactor.

The protein localises to the cytoplasm. It carries out the reaction O-phospho-L-serine + 2-oxoglutarate = 3-phosphooxypyruvate + L-glutamate. The catalysed reaction is 4-(phosphooxy)-L-threonine + 2-oxoglutarate = (R)-3-hydroxy-2-oxo-4-phosphooxybutanoate + L-glutamate. Its pathway is amino-acid biosynthesis; L-serine biosynthesis; L-serine from 3-phospho-D-glycerate: step 2/3. The protein operates within cofactor biosynthesis; pyridoxine 5'-phosphate biosynthesis; pyridoxine 5'-phosphate from D-erythrose 4-phosphate: step 3/5. Its function is as follows. Catalyzes the reversible conversion of 3-phosphohydroxypyruvate to phosphoserine and of 3-hydroxy-2-oxo-4-phosphonooxybutanoate to phosphohydroxythreonine. This is Phosphoserine aminotransferase from Polaromonas sp. (strain JS666 / ATCC BAA-500).